The sequence spans 445 residues: tRNA modification GTPase MnmE (445 aa).

Positions 20, 79, and 119 each coordinate (6S)-5-formyl-5,6,7,8-tetrahydrofolate. The TrmE-type G domain maps to 215–371 (GLKLAIIGPP…ILKNIENIAE (157 aa)). Residue Asn-225 participates in K(+) binding. Residues 225-230 (NTGKSS), 244-250 (SNIAGTT), and 269-272 (DTAG) each bind GTP. Ser-229 provides a ligand contact to Mg(2+). Ser-244, Ile-246, and Thr-249 together coordinate K(+). Thr-250 provides a ligand contact to Mg(2+). Lys-445 contacts (6S)-5-formyl-5,6,7,8-tetrahydrofolate.

This sequence belongs to the TRAFAC class TrmE-Era-EngA-EngB-Septin-like GTPase superfamily. TrmE GTPase family. Homodimer. Heterotetramer of two MnmE and two MnmG subunits. K(+) is required as a cofactor.

It is found in the cytoplasm. Exhibits a very high intrinsic GTPase hydrolysis rate. Involved in the addition of a carboxymethylaminomethyl (cmnm) group at the wobble position (U34) of certain tRNAs, forming tRNA-cmnm(5)s(2)U34. In Rickettsia prowazekii (strain Madrid E), this protein is tRNA modification GTPase MnmE.